The following is a 355-amino-acid chain: MRKIIHVDMDCFYAAIEMRDNPTLIGKPIAVGGEAKHRGVLATCNYEARKFGLHSAMSTAQAFKLCPNLILLPVNMPLYKQVSQQIHQIFRRYTDVIEPLSLDEAYLDVTDSTACSGSATWIATEIRQAIFNELGLTASAGIAPLKFLAKIASEQNKPNGQFVIKPEQIEHFIANLPLKKIPGVGKVTAQRLMAMGLNTCADIQHMNKARLLEQFGKLGQRIWAFSHGVDERHVEPHRILKSVGVERTLQHNIDELAQAYVILAELYALLIQRLKTHCPTLSFSMLHKVGVKLKFADFHVTTLEKRGMLITLNSFELLLTQIWQRAAGREIRLIGLHVNLPETTESKTQVQMSLW.

A UmuC domain is found at 4-185 (IIHVDMDCFY…LPLKKIPGVG (182 aa)). Mg(2+)-binding residues include D8 and D103. The active site involves E104.

This sequence belongs to the DNA polymerase type-Y family. Monomer. The cofactor is Mg(2+).

It localises to the cytoplasm. The catalysed reaction is DNA(n) + a 2'-deoxyribonucleoside 5'-triphosphate = DNA(n+1) + diphosphate. Poorly processive, error-prone DNA polymerase involved in untargeted mutagenesis. Copies undamaged DNA at stalled replication forks, which arise in vivo from mismatched or misaligned primer ends. These misaligned primers can be extended by PolIV. Exhibits no 3'-5' exonuclease (proofreading) activity. May be involved in translesional synthesis, in conjunction with the beta clamp from PolIII. The protein is DNA polymerase IV of Pasteurella multocida (strain Pm70).